A 110-amino-acid chain; its full sequence is uncharacterized protein (110 aa).

The chain crosses the membrane as a helical span at residues 88–108 (LTRICLLIFGIGLVVLIFLKL).

It localises to the membrane. This is an uncharacterized protein from Rickettsia prowazekii (strain Madrid E).